The following is a 152-amino-acid chain: Ribosome maturation factor RimP (152 aa).

The protein belongs to the RimP family.

It localises to the cytoplasm. Required for maturation of 30S ribosomal subunits. The sequence is that of Ribosome maturation factor RimP from Pseudomonas putida (strain GB-1).